Reading from the N-terminus, the 447-residue chain is Cobyrinate a,c-diamide synthase (447 aa).

In terms of domain architecture, GATase cobBQ-type spans 252-439; the sequence is KIAIAFDESF…AHQHAVGNPY (188 aa). C331 functions as the Nucleophile in the catalytic mechanism.

The protein belongs to the CobB/CbiA family. The cofactor is Mg(2+).

The enzyme catalyses cob(II)yrinate + 2 L-glutamine + 2 ATP + 2 H2O = cob(II)yrinate a,c diamide + 2 L-glutamate + 2 ADP + 2 phosphate + 2 H(+). It carries out the reaction Ni-sirohydrochlorin + 2 L-glutamine + 2 ATP + 2 H2O = Ni-sirohydrochlorin a,c-diamide + 2 L-glutamate + 2 ADP + 2 phosphate + 2 H(+). Its pathway is cofactor biosynthesis; adenosylcobalamin biosynthesis; cob(II)yrinate a,c-diamide from sirohydrochlorin (anaerobic route): step 10/10. Catalyzes the ATP-dependent amidation of the two carboxylate groups at positions a and c of cobyrinate, using either L-glutamine or ammonia as the nitrogen source. Involved in the biosynthesis of the unique nickel-containing tetrapyrrole coenzyme F430, the prosthetic group of methyl-coenzyme M reductase (MCR), which plays a key role in methanogenesis and anaerobic methane oxidation. Catalyzes the ATP-dependent amidation of the two carboxylate groups at positions a and c of Ni-sirohydrochlorin, using L-glutamine or ammonia as the nitrogen source. This is Cobyrinate a,c-diamide synthase from Methanococcus vannielii (strain ATCC 35089 / DSM 1224 / JCM 13029 / OCM 148 / SB).